Consider the following 1127-residue polypeptide: E3 ubiquitin-protein ligase TRIM33 (1127 aa).

A compositionally biased stretch (gly residues) spans 1–18 (MAENKGGGEAESGGGGSG). A disordered region spans residues 1 to 118 (MAENKGGGEA…PSAGPPPGPP (118 aa)). The necessary for E3 ubiquitin-protein ligase activity and repression of SMAD4 signaling and transcriptional repression stretch occupies residues 1–147 (MAENKGGGEA…AEPKLLPCLH (147 aa)). Low complexity predominate over residues 19 to 37 (SAPVTAGAAGPAAQEAEPP). A compositionally biased stretch (gly residues) spans 52 to 64 (RAGAEGGAAGPDD). Positions 65–97 (GGVAAASSGSAQAASSPAASVGTGVAGGAVSTP) are enriched in low complexity. A compositionally biased stretch (pro residues) spans 98-118 (APAPASAPAPGPSAGPPPGPP). The segment at 125 to 154 (CAVCQQSLQSRREAEPKLLPCLHSFCLRCL) adopts an RING-type zinc-finger fold. 2 consecutive B box-type zinc fingers follow at residues 212-259 (KSEQ…IRKK) and 271-312 (QRPV…YQFL). Residues Cys-217, Cys-220, Cys-241, His-245, Cys-276, His-279, Cys-299, and His-304 each coordinate Zn(2+). Residues 299–401 (CQLLEHKEHR…QMKLLQQQND (103 aa)) are necessary for oligomerization. A coiled-coil region spans residues 299–401 (CQLLEHKEHR…QMKLLQQQND (103 aa)). Glycyl lysine isopeptide (Lys-Gly) (interchain with G-Cter in SUMO2) cross-links involve residues Lys-329, Lys-334, Lys-481, and Lys-504. At Arg-515 the chain carries Asymmetric dimethylarginine; alternate. At Arg-515 the chain carries Omega-N-methylarginine; alternate. A Glycyl lysine isopeptide (Lys-Gly) (interchain with G-Cter in SUMO2) cross-link involves residue Lys-527. At Arg-535 the chain carries Omega-N-methylarginine. The tract at residues 536–563 (MQQPPAPVPTTTTTTQQHPRQAAPQMLQ) is disordered. Asymmetric dimethylarginine is present on Arg-577. Arg-591 is subject to Asymmetric dimethylarginine; alternate. An Omega-N-methylarginine; alternate modification is found at Arg-591. Asymmetric dimethylarginine is present on residues Arg-598 and Arg-604. Disordered stretches follow at residues 608–629 (PQYSMMQPHLQRQHSNPGHAGP), 673–692 (NPENLPSLPDIPPIQLEDAG), and 703–818 (YISG…TPPL). The span at 723–759 (PSALSPGSSGLSNSHTPVRPPSTSSTGSRGSCGSSGR) shows a compositional bias: low complexity. An N6-acetyllysine; alternate mark is found at Lys-763 and Lys-769. Residues Lys-763 and Lys-769 each participate in a glycyl lysine isopeptide (Lys-Gly) (interchain with G-Cter in SUMO2); alternate cross-link. Residue Lys-774 forms a Glycyl lysine isopeptide (Lys-Gly) (interchain with G-Cter in SUMO2) linkage. Glycyl lysine isopeptide (Lys-Gly) (interchain with G-Cter in SUMO2); alternate cross-links involve residues Lys-776 and Lys-793. Residues Lys-776 and Lys-793 each participate in a glycyl lysine isopeptide (Lys-Gly) (interchain with G-Cter in SUMO1); alternate cross-link. N6-acetyllysine; alternate is present on Lys-793. Positions 793 to 802 (KQEKTEDGRR) are enriched in basic and acidic residues. Lys-796 is covalently cross-linked (Glycyl lysine isopeptide (Lys-Gly) (interchain with G-Cter in SUMO2)). Phosphoserine is present on Ser-803. The span at 807–818 (LSSPESSLTPPL) shows a compositional bias: low complexity. The residue at position 815 (Thr-815) is a Phosphothreonine. Lys-861 participates in a covalent cross-link: Glycyl lysine isopeptide (Lys-Gly) (interchain with G-Cter in SUMO2). Ser-862 is subject to Phosphoserine. The PHD-type zinc-finger motif lies at 887-934 (EDWCAVCQNGGDLLCCEKCPKVFHLTCHVPTLLSFPSGDWICTFCRDI). Lys-951 carries the N6-acetyllysine modification. Lys-953 is subject to N6-acetyllysine; alternate. Lys-953 is covalently cross-linked (Glycyl lysine isopeptide (Lys-Gly) (interchain with G-Cter in SUMO2); alternate). In terms of domain architecture, Bromo spans 957–1080 (GLSPVDQRKC…LYFEDKLTEI (124 aa)). Glycyl lysine isopeptide (Lys-Gly) (interchain with G-Cter in SUMO2) cross-links involve residues Lys-1007 and Lys-1043. Thr-1051 is modified (phosphothreonine). A Glycyl lysine isopeptide (Lys-Gly) (interchain with G-Cter in SUMO2) cross-link involves residue Lys-1057. The tract at residues 1088–1127 (PLPEFEQEEDDGEVTEDSDEDFIQPRRKRLKSDERPVHIK) is disordered. A compositionally biased stretch (acidic residues) spans 1092 to 1109 (FEQEEDDGEVTEDSDEDF). Position 1102 is a phosphothreonine (Thr-1102). Position 1105 is a phosphoserine (Ser-1105). A Glycyl lysine isopeptide (Lys-Gly) (interchain with G-Cter in SUMO2) cross-link involves residue Lys-1118. A compositionally biased stretch (basic and acidic residues) spans 1118-1127 (KSDERPVHIK). Ser-1119 is subject to Phosphoserine.

Belongs to the TRIM/RBCC family. As to quaternary structure, homooligomer and heterooligomer with TRIM24 and TRIM28 family members. Interacts with SMAD4 in unstimulated cells. Found in a complex with SMAD2 and SMAD3 upon addition of TGF-beta. Interacts with SMAD2 and SMAD3. Interacts with SMAD4 under basal and induced conditions and, upon TGF-beta signaling, with activated SMAD2. Forms a ternary complex with SMAD4 and SMAD2 upon TGF-beta signaling. In terms of processing, sumoylated with SUMO1. In terms of tissue distribution, expressed in stem cells at the bottom of the crypts of the colon (at protein level). Expressed in colon adenomas and adenocarcinomas (at protein level). Expressed in brain, lung, liver, spleen, thymus, prostate, kidney, testis, heart, placenta, pancreas, small intestine, ovary, colon, skeletal muscle and hematopoietic progenitors.

Its subcellular location is the nucleus. The catalysed reaction is S-ubiquitinyl-[E2 ubiquitin-conjugating enzyme]-L-cysteine + [acceptor protein]-L-lysine = [E2 ubiquitin-conjugating enzyme]-L-cysteine + N(6)-ubiquitinyl-[acceptor protein]-L-lysine.. Its pathway is protein modification; protein ubiquitination. Functionally, acts as an E3 ubiquitin-protein ligase. Promotes SMAD4 ubiquitination, nuclear exclusion and degradation via the ubiquitin proteasome pathway. According to PubMed:16751102, does not promote a decrease in the level of endogenous SMAD4. May act as a transcriptional repressor. Inhibits the transcriptional response to TGF-beta/BMP signaling cascade. Plays a role in the control of cell proliferation. Its association with SMAD2 and SMAD3 stimulates erythroid differentiation of hematopoietic stem/progenitor. Monoubiquitinates SMAD4 and acts as an inhibitor of SMAD4-dependent TGF-beta/BMP signaling cascade (Monoubiquitination of SMAD4 hampers its ability to form a stable complex with activated SMAD2/3 resulting in inhibition of TGF-beta/BMP signaling cascade). This chain is E3 ubiquitin-protein ligase TRIM33 (TRIM33), found in Homo sapiens (Human).